The sequence spans 299 residues: Oxygen-dependent coproporphyrinogen-III oxidase (299 aa).

S92 contributes to the substrate binding site. Residues H96 and H106 each contribute to the Mn(2+) site. The active-site Proton donor is H106. 108–110 (NVR) is a binding site for substrate. Mn(2+) is bound by residues H145 and H175. The segment at 240–275 (YVEFNLVWDRGTLFGLQTGGRTESILMSMPPLVRWE) is important for dimerization. 258–260 (GGR) provides a ligand contact to substrate.

Belongs to the aerobic coproporphyrinogen-III oxidase family. In terms of assembly, homodimer. Mn(2+) serves as cofactor.

It is found in the cytoplasm. The enzyme catalyses coproporphyrinogen III + O2 + 2 H(+) = protoporphyrinogen IX + 2 CO2 + 2 H2O. It participates in porphyrin-containing compound metabolism; protoporphyrin-IX biosynthesis; protoporphyrinogen-IX from coproporphyrinogen-III (O2 route): step 1/1. Its function is as follows. Involved in the heme biosynthesis. Catalyzes the aerobic oxidative decarboxylation of propionate groups of rings A and B of coproporphyrinogen-III to yield the vinyl groups in protoporphyrinogen-IX. This Escherichia coli O157:H7 protein is Oxygen-dependent coproporphyrinogen-III oxidase.